The primary structure comprises 363 residues: tRNA/tmRNA (uracil-C(5))-methyltransferase (363 aa).

Residues Gln-187, Tyr-215, Asn-220, Glu-236, and Asp-296 each contribute to the S-adenosyl-L-methionine site. The active-site Nucleophile is Cys-321. The Proton acceptor role is filled by Glu-355.

It belongs to the class I-like SAM-binding methyltransferase superfamily. RNA M5U methyltransferase family. TrmA subfamily.

The catalysed reaction is uridine(54) in tRNA + S-adenosyl-L-methionine = 5-methyluridine(54) in tRNA + S-adenosyl-L-homocysteine + H(+). It catalyses the reaction uridine(341) in tmRNA + S-adenosyl-L-methionine = 5-methyluridine(341) in tmRNA + S-adenosyl-L-homocysteine + H(+). Functionally, dual-specificity methyltransferase that catalyzes the formation of 5-methyluridine at position 54 (m5U54) in all tRNAs, and that of position 341 (m5U341) in tmRNA (transfer-mRNA). This Pseudomonas aeruginosa (strain UCBPP-PA14) protein is tRNA/tmRNA (uracil-C(5))-methyltransferase.